The primary structure comprises 273 residues: 4-hydroxy-tetrahydrodipicolinate reductase (273 aa).

NAD(+) is bound by residues 12–17 (GAGGRM) and E38. Residue R39 coordinates NADP(+). NAD(+)-binding positions include 102–104 (GTT) and 126–129 (AANF). H159 serves as the catalytic Proton donor/acceptor. H160 contacts (S)-2,3,4,5-tetrahydrodipicolinate. K163 acts as the Proton donor in catalysis. 169-170 (GT) contributes to the (S)-2,3,4,5-tetrahydrodipicolinate binding site.

Belongs to the DapB family. As to quaternary structure, homotetramer.

It localises to the cytoplasm. It catalyses the reaction (S)-2,3,4,5-tetrahydrodipicolinate + NAD(+) + H2O = (2S,4S)-4-hydroxy-2,3,4,5-tetrahydrodipicolinate + NADH + H(+). It carries out the reaction (S)-2,3,4,5-tetrahydrodipicolinate + NADP(+) + H2O = (2S,4S)-4-hydroxy-2,3,4,5-tetrahydrodipicolinate + NADPH + H(+). The protein operates within amino-acid biosynthesis; L-lysine biosynthesis via DAP pathway; (S)-tetrahydrodipicolinate from L-aspartate: step 4/4. Functionally, catalyzes the conversion of 4-hydroxy-tetrahydrodipicolinate (HTPA) to tetrahydrodipicolinate. The protein is 4-hydroxy-tetrahydrodipicolinate reductase of Photorhabdus laumondii subsp. laumondii (strain DSM 15139 / CIP 105565 / TT01) (Photorhabdus luminescens subsp. laumondii).